Consider the following 179-residue polypeptide: MVKLVVGIGNPGRQYVWTRHNIGFLLLDSLASRFLGAFREAPRLYASFAKVEISSEAVVLMKPTTYVNLTGKAVLAAKKFFDVSMEDILVVADDINREFGFVRFRQDCGSGGHNGIKNTTQILQSNHYWQLRLGVGRPSYPGAEGVADYVLSSFSLNEKEKLNDFLEKGIEEIFPWLGC.

Tyr15 contacts tRNA. The active-site Proton acceptor is the His20. TRNA contacts are provided by Tyr66, Asn68, and Asn114.

This sequence belongs to the PTH family. In terms of assembly, monomer.

The protein localises to the cytoplasm. The catalysed reaction is an N-acyl-L-alpha-aminoacyl-tRNA + H2O = an N-acyl-L-amino acid + a tRNA + H(+). Its function is as follows. Hydrolyzes ribosome-free peptidyl-tRNAs (with 1 or more amino acids incorporated), which drop off the ribosome during protein synthesis, or as a result of ribosome stalling. In terms of biological role, catalyzes the release of premature peptidyl moieties from peptidyl-tRNA molecules trapped in stalled 50S ribosomal subunits, and thus maintains levels of free tRNAs and 50S ribosomes. This is Peptidyl-tRNA hydrolase from Chlamydia trachomatis serovar L2b (strain UCH-1/proctitis).